Here is an 89-residue protein sequence, read N- to C-terminus: Small ribosomal subunit protein uS15 (89 aa).

It belongs to the universal ribosomal protein uS15 family. Part of the 30S ribosomal subunit. Forms a bridge to the 50S subunit in the 70S ribosome, contacting the 23S rRNA.

In terms of biological role, one of the primary rRNA binding proteins, it binds directly to 16S rRNA where it helps nucleate assembly of the platform of the 30S subunit by binding and bridging several RNA helices of the 16S rRNA. Forms an intersubunit bridge (bridge B4) with the 23S rRNA of the 50S subunit in the ribosome. The chain is Small ribosomal subunit protein uS15 from Levilactobacillus brevis (strain ATCC 367 / BCRC 12310 / CIP 105137 / JCM 1170 / LMG 11437 / NCIMB 947 / NCTC 947) (Lactobacillus brevis).